We begin with the raw amino-acid sequence, 437 residues long: ATP-dependent protease ATPase subunit HslU (437 aa).

ATP contacts are provided by residues valine 18, 60–65 (GCGKTE), aspartate 250, glutamate 315, and arginine 387.

This sequence belongs to the ClpX chaperone family. HslU subfamily. In terms of assembly, a double ring-shaped homohexamer of HslV is capped on each side by a ring-shaped HslU homohexamer. The assembly of the HslU/HslV complex is dependent on binding of ATP.

It localises to the cytoplasm. ATPase subunit of a proteasome-like degradation complex; this subunit has chaperone activity. The binding of ATP and its subsequent hydrolysis by HslU are essential for unfolding of protein substrates subsequently hydrolyzed by HslV. HslU recognizes the N-terminal part of its protein substrates and unfolds these before they are guided to HslV for hydrolysis. The chain is ATP-dependent protease ATPase subunit HslU from Methylobacterium sp. (strain 4-46).